The sequence spans 90 residues: Protein LIM1 (90 aa).

The first 26 residues, 1-26, serve as a signal peptide directing secretion; that stretch reads MASMKSLATAILVVLLLAALSREGRS. 4 disulfide bridges follow: Cys-29-Cys-66, Cys-39-Cys-55, Cys-56-Cys-81, and Cys-68-Cys-88.

The protein belongs to the A9/FIL1 family.

It is found in the secreted. In Lilium longiflorum (Trumpet lily), this protein is Protein LIM1 (LIM1).